Reading from the N-terminus, the 535-residue chain is Prolyl 4-hydroxylase subunit alpha-2 (535 aa).

The N-terminal stretch at Met1 to Ala21 is a signal peptide. A glycan (N-linked (GlcNAc...) asparagine) is linked at Asn115. The TPR repeat unit spans residues Ser207–His240. Asn264 carries N-linked (GlcNAc...) asparagine glycosylation. The region spanning Thr412–Glu520 is the Fe2OG dioxygenase domain. 2 residues coordinate Fe cation: His430 and Asp432. N6-succinyllysine is present on Lys480. A Fe cation-binding site is contributed by His501. Residue Lys511 coordinates 2-oxoglutarate.

Belongs to the P4HA family. Heterotetramer of two alpha-2 chains and two beta chains (P4HB) (the beta chain is the multi-functional PDI), where P4HB plays the role of a structural subunit; this tetramer catalyzes the formation of 4-hydroxyproline in collagen. Fe(2+) serves as cofactor. L-ascorbate is required as a cofactor. As to expression, expressed in the heart, placenta, lung and pancreas.

It is found in the endoplasmic reticulum lumen. The enzyme catalyses L-prolyl-[collagen] + 2-oxoglutarate + O2 = trans-4-hydroxy-L-prolyl-[collagen] + succinate + CO2. Inhibited by poly(L-proline) only at very high concentrations. Functionally, catalyzes the post-translational formation of 4-hydroxyproline in -Xaa-Pro-Gly- sequences in collagens and other proteins. The sequence is that of Prolyl 4-hydroxylase subunit alpha-2 (P4HA2) from Homo sapiens (Human).